We begin with the raw amino-acid sequence, 787 residues long: LPS-assembly protein LptD (787 aa).

The N-terminal stretch at 1–24 is a signal peptide; that stretch reads MKKSFPTLLATLVWSALYSQHALA.

The protein belongs to the LptD family. In terms of assembly, component of the lipopolysaccharide transport and assembly complex. Interacts with LptE and LptA.

It localises to the cell outer membrane. Its function is as follows. Together with LptE, is involved in the assembly of lipopolysaccharide (LPS) at the surface of the outer membrane. The chain is LPS-assembly protein LptD from Pectobacterium atrosepticum (strain SCRI 1043 / ATCC BAA-672) (Erwinia carotovora subsp. atroseptica).